Here is a 227-residue protein sequence, read N- to C-terminus: Cytidylate kinase (227 aa).

ATP is bound at residue 12-20 (GPGGAGKGT).

This sequence belongs to the cytidylate kinase family. Type 1 subfamily.

The protein localises to the cytoplasm. The catalysed reaction is CMP + ATP = CDP + ADP. It catalyses the reaction dCMP + ATP = dCDP + ADP. This Klebsiella pneumoniae (strain 342) protein is Cytidylate kinase.